Reading from the N-terminus, the 749-residue chain is Cytosolic phospholipase A2 (749 aa).

Residues 1-178 (MSFIDPYQHI…MKKLLGPKKS (178 aa)) are phospholipid binding. At Ser2 the chain carries Phosphoserine. Residues 6–122 (PYQHIIVEHQ…KVGEKKEVPF (117 aa)) form the C2 domain. Ca(2+)-binding residues include Asp40, Thr41, Asp43, Asn65, Asp93, Ala94, and Asn95. The region spanning 140-740 (SCPDLRFSMA…SNVEARRFFN (601 aa)) is the PLA2c domain. Ser228 acts as the Nucleophile in catalysis. Thr268 carries the phosphothreonine modification. The tract at residues 427-456 (KHIVSNDSSDSDDESQEPKGTENEDAERDY) is disordered. A phosphoserine mark is found at Ser434, Ser435, and Ser437. Ser505 carries the phosphoserine; by MAPK modification. Phosphoserine is present on Ser515. Residue Lys541 forms a Glycyl lysine isopeptide (Lys-Gly) (interchain with G-Cter in SUMO2) linkage. The active-site Proton acceptor is Asp549. Lys606 participates in a covalent cross-link: Glycyl lysine isopeptide (Lys-Gly) (interchain with G-Cter in SUMO2). Residues Ser727 and Ser729 each carry the phosphoserine modification.

Interacts with KAT5. In terms of processing, phosphorylated at both Ser-505 and Ser-727 in response to mitogenic stimuli.

It localises to the cytoplasm. The protein resides in the golgi apparatus membrane. It is found in the nucleus envelope. The catalysed reaction is a 1,2-diacyl-sn-glycero-3-phosphocholine + H2O = a 1-acyl-sn-glycero-3-phosphocholine + a fatty acid + H(+). It carries out the reaction a 1-O-alkyl-2-acyl-sn-glycero-3-phosphocholine + H2O = a 1-O-alkyl-sn-glycero-3-phosphocholine + a fatty acid + H(+). It catalyses the reaction a 1-acyl-sn-glycero-3-phosphocholine + H2O = sn-glycerol 3-phosphocholine + a fatty acid + H(+). The enzyme catalyses 1-hexadecanoyl-2-(5Z,8Z,11Z,14Z-eicosatetraenoyl)-sn-glycero-3-phosphocholine + H2O = 1-hexadecanoyl-sn-glycero-3-phosphocholine + (5Z,8Z,11Z,14Z)-eicosatetraenoate + H(+). The catalysed reaction is 1,2-di-(5Z,8Z,11Z,14Z-eicosatetraenoyl)-sn-glycero-3-phosphocholine + H2O = 1-(5Z,8Z,11Z,14Z-eicosatetraenoyl)-sn-glycero-3-phosphocholine + (5Z,8Z,11Z,14Z)-eicosatetraenoate + H(+). It carries out the reaction 1-octadecanoyl-2-(5Z,8Z,11Z,14Z-eicosatetraenoyl)-sn-glycero-3-phosphocholine + H2O = 1-octadecanoyl-sn-glycero-3-phosphocholine + (5Z,8Z,11Z,14Z)-eicosatetraenoate + H(+). It catalyses the reaction 1-hexadecanoyl-2-(9Z,12Z-octadecadienoyl)-sn-glycero-3-phosphocholine + H2O = (9Z,12Z)-octadecadienoate + 1-hexadecanoyl-sn-glycero-3-phosphocholine + H(+). The enzyme catalyses 1-octadecanoyl-2-(9Z,12Z,15Z-octadecatrienoyl)-sn-glycero-3-phosphocholine + H2O = (9Z,12Z,15Z)-octadecatrienoate + 1-octadecanoyl-sn-glycero-3-phosphocholine + H(+). The catalysed reaction is 1-(5Z,8Z,11Z,14Z-eicosatetraenoyl)-2-hexadecanoyl-sn-glycero-3-phosphocholine + H2O = 1-(5Z,8Z,11Z,14Z-eicosatetraenoyl)-sn-glycero-3-phosphocholine + hexadecanoate + H(+). It carries out the reaction 1-O-hexadecyl-2-(5Z,8Z,11Z,14Z)-eicosatetraenoyl-sn-glycero-3-phosphocholine + H2O = 1-O-hexadecyl-sn-glycero-3-phosphocholine + (5Z,8Z,11Z,14Z)-eicosatetraenoate + H(+). It catalyses the reaction 1,2-di-(9Z-octadecenoyl)-sn-glycero-3-phospho-(1'-sn-glycerol) + H2O = 1-(9Z-octadecenoyl)-sn-glycero-3-phospho-(1'-sn-glycerol) + (9Z)-octadecenoate + H(+). The enzyme catalyses 1-octadecanoyl-2-(5Z,8Z,11Z,14Z-eicosatetraenoyl)-sn-glycero-3-phosphate + H2O = 1-octadecanoyl-sn-glycero-3-phosphate + (5Z,8Z,11Z,14Z)-eicosatetraenoate + H(+). The catalysed reaction is 1-hexadecanoyl-sn-glycero-3-phosphocholine + H2O = sn-glycerol 3-phosphocholine + hexadecanoate + H(+). It carries out the reaction 2-(prostaglandin E2)-sn-glycero-3-phosphoethanolamine + H2O = sn-glycero-3-phosphoethanolamine + prostaglandin E2 + H(+). It catalyses the reaction 2-[(15S)-hydroxy-(5Z,8Z,11Z,13E)-eicosatetraenoyl]-sn-glycero-3-phosphocholine + H2O = (15S)-hydroxy-(5Z,8Z,11Z,13E)-eicosatetraenoate + sn-glycerol 3-phosphocholine + H(+). The enzyme catalyses 2-[(15R)-hydroxy-(5Z,8Z,11Z,13E)-eicosatetraenoyl]-sn-glycero-3-phosphocholine + H2O = (15R)-hydroxy-(5Z,8Z,11Z,13E)-eicosatetraenoate + sn-glycerol 3-phosphocholine + H(+). The catalysed reaction is 2-(prostaglandin E2)-sn-glycero-3-phosphocholine + H2O = prostaglandin E2 + sn-glycerol 3-phosphocholine + H(+). It carries out the reaction 2-[(11R)-hydroxy-(5Z,8Z,12E,14Z)-eicosatetraenoyl]-sn-glycero-3-phosphocholine + H2O = (11R)-hydroxy-(5Z,8Z,12E,14Z)-eicosatetraenoate + sn-glycerol 3-phosphocholine + H(+). It catalyses the reaction 1-(5Z,8Z,11Z,14Z-eicosatetraenoyl)-2-O-hexadecyl-sn-glycero-3-phosphocholine + H2O = 2-O-hexadecyl-sn-glycero-3-phosphocholine + (5Z,8Z,11Z,14Z)-eicosatetraenoate + H(+). The enzyme catalyses 1-octadecanoyl-2-(5Z,8Z,11Z,14Z-eicosatetraenoyl)-sn-glycero-3-phosphocholine + glycerol = 1-(5Z,8Z,11Z,14Z-eicosatetraenoyl)-glycerol + 1-octadecanoyl-sn-glycero-3-phosphocholine. The catalysed reaction is 1-octadecanoyl-2-(9Z,12Z,15Z-octadecatrienoyl)-sn-glycero-3-phosphocholine + glycerol = 1-(9Z,12Z,15Z-octadecatrienoyl)-glycerol + 1-octadecanoyl-sn-glycero-3-phosphocholine. It functions in the pathway membrane lipid metabolism; glycerophospholipid metabolism. The protein operates within lipid metabolism; arachidonate metabolism. It participates in lipid metabolism; prostaglandin biosynthesis. Its pathway is lipid metabolism; leukotriene B4 biosynthesis. Its activity is regulated as follows. Activated by cytosolic calcium, which is necessary for binding to membrane lipids. Activated by phosphorylation in response to mitogenic stimuli. Its function is as follows. Has primarily calcium-dependent phospholipase and lysophospholipase activities, with a major role in membrane lipid remodeling and biosynthesis of lipid mediators of the inflammatory response. Plays an important role in embryo implantation and parturition through its ability to trigger prostanoid production. Preferentially hydrolyzes the ester bond of the fatty acyl group attached at sn-2 position of phospholipids (phospholipase A2 activity). Selectively hydrolyzes sn-2 arachidonoyl group from membrane phospholipids, providing the precursor for eicosanoid biosynthesis via the cyclooxygenase pathway. In an alternative pathway of eicosanoid biosynthesis, hydrolyzes sn-2 fatty acyl chain of eicosanoid lysophopholipids to release free bioactive eicosanoids. Hydrolyzes the ester bond of the fatty acyl group attached at sn-1 position of phospholipids (phospholipase A1 activity) only if an ether linkage rather than an ester linkage is present at the sn-2 position. This hydrolysis is not stereospecific. Has calcium-independent phospholipase A2 and lysophospholipase activities in the presence of phosphoinositides. Has O-acyltransferase activity. Catalyzes the transfer of fatty acyl chains from phospholipids to a primary hydroxyl group of glycerol (sn-1 or sn-3), potentially contributing to monoacylglycerol synthesis. The chain is Cytosolic phospholipase A2 (PLA2G4A) from Equus caballus (Horse).